The following is a 412-amino-acid chain: COP9 signalosome complex subunit 4 (412 aa).

Positions 216–378 (EAAQRYYELS…GILHFEDSNP (163 aa)) constitute a PCI domain.

It belongs to the CSN4 family. In terms of assembly, component of the CSN complex, probably composed of csn-1, csn-2, csn-3, csn-4, csn-5, csn-6 and csn-7. Within the complex it probably interacts directly with csn-2 and csn-4. In the complex, it probably interacts directly with csn-1, csn-2, csn-3 and csn-6. Interacts with itself.

It localises to the cytoplasm. The protein resides in the nucleus. Functionally, component of the COP9 signalosome complex (CSN), a complex involved in various cellular and developmental processes. The CSN complex is an essential regulator of the ubiquitin (Ubl) conjugation pathway by mediating the deneddylation of the cullin subunits of the SCF-type E3 ligase complexes, leading to decrease the Ubl ligase activity of SCF. The CSN complex plays an essential role in embryogenesis and oogenesis and is required to regulate microtubule stability in the early embryo. Mediates mei-3/katanin targeting for degradation at the meiosis to mitosis transition via deneddylation of cul-3. This is COP9 signalosome complex subunit 4 (csn-4) from Caenorhabditis elegans.